The primary structure comprises 503 residues: Arabinose import ATP-binding protein AraG 1 (503 aa).

ABC transporter domains are found at residues 5 to 240 (LRFD…MVGR) and 251 to 497 (RALG…LPQT). An ATP-binding site is contributed by 37–44 (GENGAGKS).

The protein belongs to the ABC transporter superfamily. Arabinose importer (TC 3.A.1.2.2) family. The complex is composed of two ATP-binding proteins (AraG), two transmembrane proteins (AraH) and a solute-binding protein (AraF).

It localises to the cell inner membrane. It catalyses the reaction L-arabinose(out) + ATP + H2O = L-arabinose(in) + ADP + phosphate + H(+). Part of the ABC transporter complex AraFGH involved in arabinose import. Responsible for energy coupling to the transport system. The chain is Arabinose import ATP-binding protein AraG 1 from Burkholderia ambifaria (strain ATCC BAA-244 / DSM 16087 / CCUG 44356 / LMG 19182 / AMMD) (Burkholderia cepacia (strain AMMD)).